Consider the following 598-residue polypeptide: DNA (cytosine-5)-methyltransferase DRM2 (598 aa).

Disordered stretches follow at residues 1–49 (MVDW…NGKA) and 114–146 (EVDE…GDED). The UBA 1 domain maps to 42–91 (PQDANGKANGSGALVAEFMGMGFPKEMILKAIKEIGDTDTEQLLELLLTY). Over residues 114-128 (EVDEEEDDTNWDEYD) the composition is skewed to acidic residues. Positions 150-194 (EMSEKDEKMKSLVNMGFPEDEAKMAIDRCGLDAPVAVLVDSIYAS) constitute a UBA 2 domain. The tract at residues 227-252 (GSKKRKRYGSGPSGNQVPFDGSHEEP) is disordered. An SAM-dependent MTase DRM-type domain is found at 272 to 598 (VHRNLPDQAL…EHVKATMSAV (327 aa)).

It belongs to the class I-like SAM-binding methyltransferase superfamily. DRM-methyltransferase family. As to quaternary structure, interacts (via UBA domains) with EIF4A.

The protein localises to the nucleus. It carries out the reaction a 2'-deoxycytidine in DNA + S-adenosyl-L-methionine = a 5-methyl-2'-deoxycytidine in DNA + S-adenosyl-L-homocysteine + H(+). Its function is as follows. Involved in de novo DNA methylation. Required for CpG and non-CpG methylation. Required for normal establishment and maintenance of RNA-directed DNA methylation (RdDM) mediated by small interfering RNAs (siRNAs). Regulates proper plant development in both vegetative and reproductive stages through DNA methylation. This Oryza sativa subsp. japonica (Rice) protein is DNA (cytosine-5)-methyltransferase DRM2.